A 204-amino-acid chain; its full sequence is Lysozyme g (204 aa).

Positions 1 to 19 (MHLMLVLLGLAALLGTSQS) are cleaved as a signal peptide. Cystine bridges form between C23-C79 and C37-C48. Catalysis depends on residues E92 and D105.

This sequence belongs to the glycosyl hydrolase 23 family.

It is found in the secreted. It carries out the reaction Hydrolysis of (1-&gt;4)-beta-linkages between N-acetylmuramic acid and N-acetyl-D-glucosamine residues in a peptidoglycan and between N-acetyl-D-glucosamine residues in chitodextrins.. In terms of biological role, has bacteriolytic activity against M.luteus. The sequence is that of Lysozyme g from Struthio camelus (Common ostrich).